The sequence spans 714 residues: Fatty acid oxidation complex subunit alpha (714 aa).

The enoyl-CoA hydratase stretch occupies residues 1–190 (MEMASVFTLN…KLGLVDDVVP (190 aa)). Residues 306–714 (APLNSVGILG…FWKTTATDLQ (409 aa)) are 3-hydroxyacyl-CoA dehydrogenase.

The protein in the N-terminal section; belongs to the enoyl-CoA hydratase/isomerase family. In the central section; belongs to the 3-hydroxyacyl-CoA dehydrogenase family. As to quaternary structure, heterotetramer of two alpha chains (FadJ) and two beta chains (FadI).

It localises to the cytoplasm. The enzyme catalyses a (3S)-3-hydroxyacyl-CoA = a (2E)-enoyl-CoA + H2O. It carries out the reaction a 4-saturated-(3S)-3-hydroxyacyl-CoA = a (3E)-enoyl-CoA + H2O. It catalyses the reaction a (3S)-3-hydroxyacyl-CoA + NAD(+) = a 3-oxoacyl-CoA + NADH + H(+). The catalysed reaction is (3S)-3-hydroxybutanoyl-CoA = (3R)-3-hydroxybutanoyl-CoA. Its pathway is lipid metabolism; fatty acid beta-oxidation. Its function is as follows. Catalyzes the formation of a hydroxyacyl-CoA by addition of water on enoyl-CoA. Also exhibits 3-hydroxyacyl-CoA epimerase and 3-hydroxyacyl-CoA dehydrogenase activities. This Escherichia coli O139:H28 (strain E24377A / ETEC) protein is Fatty acid oxidation complex subunit alpha.